Consider the following 350-residue polypeptide: Putative ATP-binding protein BRA0745/BS1330_II0738 (350 aa).

Positions 4-234 (VSLRGISKTF…PANKFVAGFI (231 aa)) constitute an ABC transporter domain. Residue 36–43 (GPSGCGKS) participates in ATP binding.

The protein belongs to the ABC transporter superfamily. The complex is composed of two ATP-binding proteins (BRA0745), two transmembrane proteins (BRA0749) and a solute-binding protein (BRA0748).

The protein resides in the cell inner membrane. Functionally, probably part of an ABC transporter complex. Probably responsible for energy coupling to the transport system. The chain is Putative ATP-binding protein BRA0745/BS1330_II0738 from Brucella suis biovar 1 (strain 1330).